The chain runs to 388 residues: Na(+)/H(+) antiporter NhaA (388 aa).

12 helical membrane-spanning segments follow: residues 8 to 28 (FLKLEAAGGLLLIITAIIALI), 33 to 53 (PLQGIYQQFLNISVAVQFAAL), 59 to 79 (LLLWINDGLMAVFFLIVGLEV), 95 to 115 (LFPVIAAIGGMVAPALIYLLF), 125 to 145 (GWAIPAATDIAFALGVMALLS), 154 to 174 (VFLLALAIIDDLGVIVIIALF), 179 to 199 (VSLVALGLSAAMIALLVWMNW), 217 to 237 (VCILKSGVHATLAGVIVGFLI), 259 to 279 (VAYLILPLFAFANAGVALNGV), 287 to 307 (ILPLGIAVALFLGKPLGIFLF), 328 to 348 (IFAVSVLCGIGFTMSIFISGL), and 363 to 383 (LGILMGSTIAAFMGYGLLRMV).

Belongs to the NhaA Na(+)/H(+) (TC 2.A.33) antiporter family.

Its subcellular location is the cell inner membrane. The enzyme catalyses Na(+)(in) + 2 H(+)(out) = Na(+)(out) + 2 H(+)(in). Functionally, na(+)/H(+) antiporter that extrudes sodium in exchange for external protons. The protein is Na(+)/H(+) antiporter NhaA of Photorhabdus laumondii subsp. laumondii (strain DSM 15139 / CIP 105565 / TT01) (Photorhabdus luminescens subsp. laumondii).